The primary structure comprises 319 residues: 12-(S)-hydroxy-5,8,10,14-eicosatetraenoic acid receptor (319 aa).

Residues 1–16 are Extracellular-facing; it reads MPFPNCSAPSTVVATA. Asn5 is a glycosylation site (N-linked (GlcNAc...) asparagine). A helical membrane pass occupies residues 17 to 37; sequence VGVLLGLECGLGLLGNAVALW. The Cytoplasmic segment spans residues 38-52; that stretch reads TFLFRVRVWKPYAVY. The helical transmembrane segment at 53 to 73 threads the bilayer; that stretch reads LLNLALADLLLAACLPFLAAF. Residues 74–91 are Extracellular-facing; it reads YLSLQAWHLGRVGCWALH. A helical transmembrane segment spans residues 92–110; it reads FLLDLSRSVGMAFLAAVAL. Residues 111–131 lie on the Cytoplasmic side of the membrane; the sequence is DRYLRVVHPRLKVNLLSPQAA. Residues 132–152 form a helical membrane-spanning segment; that stretch reads LGVSGLVWLLMVALTCPGLLI. Over 153-180 the chain is Extracellular; sequence SEAAQNSTRCHSFYSRADGSFSIIWQEA. A helical transmembrane segment spans residues 181 to 201; the sequence is LSCLQFVLPFGLIVFCNAGII. The Cytoplasmic portion of the chain corresponds to 202–219; it reads RALQKRLREPEKQPKLQR. A helical transmembrane segment spans residues 220–240; the sequence is AQALVTLVVVLFALCFLPCFL. Topologically, residues 241–265 are extracellular; it reads ARVLMHIFQNLGSCRALCAVAHTSD. A helical transmembrane segment spans residues 266–284; the sequence is VTGSLTYLHSVLNPVVYCF. Over 285 to 319 the chain is Cytoplasmic; the sequence is SSPTFRSSYRRVFHTLRGKGQAAEPPDFNPRDSYS.

This sequence belongs to the G-protein coupled receptor 1 family. In terms of assembly, interacts with KRAS; in a farnesylation-dependent manner.

The protein resides in the cell membrane. In terms of biological role, high-affinity receptor for 12-(S)-hydroxy-5,8,10,14-eicosatetraenoic acid (12-S-HETE), with much lower affinities for other HETE isomers. 12-S-HETE is a eicosanoid, a 12-lipoxygenase (ALOX12) metabolite of arachidonic acid, involved in many physiologic and pathologic processes. 12-S-HETE-binding leads to activation of ERK1/2 (MAPK3/MAPK1), MEK, and NF-kappa-B pathways leading to cell growth. Plays a crucial role for proliferation, survival and macropinocytosis of KRAS-dependent cancer cells by mediating the translocation of KRAS from the endoplasmic reticulum to the plasma membrane (PM) and its association with the PM. Contributes to enhanced immune responses by inducing dendrite protrusion of small intestinal CX3CR1(+) phagocytes for the uptake of luminal antigens. Acts also as a key receptor for 12-(S)-HETE-mediated liver ischemia reperfusion injury. Proton-sensing G protein-coupled receptor. This Homo sapiens (Human) protein is 12-(S)-hydroxy-5,8,10,14-eicosatetraenoic acid receptor (GPR31).